The sequence spans 307 residues: Acetyl-coenzyme A carboxylase carboxyl transferase subunit beta (307 aa).

Residues Leu-28–Pro-297 form the CoA carboxyltransferase N-terminal domain. The segment at Arg-286–Ala-307 is disordered. Pro residues predominate over residues Gly-292–Ala-307.

This sequence belongs to the AccD/PCCB family. Acetyl-CoA carboxylase is a heterohexamer composed of biotin carboxyl carrier protein (AccB), biotin carboxylase (AccC) and two subunits each of ACCase subunit alpha (AccA) and ACCase subunit beta (AccD).

Its subcellular location is the cytoplasm. The catalysed reaction is N(6)-carboxybiotinyl-L-lysyl-[protein] + acetyl-CoA = N(6)-biotinyl-L-lysyl-[protein] + malonyl-CoA. Its pathway is lipid metabolism; malonyl-CoA biosynthesis; malonyl-CoA from acetyl-CoA: step 1/1. Its function is as follows. Component of the acetyl coenzyme A carboxylase (ACC) complex. Biotin carboxylase (BC) catalyzes the carboxylation of biotin on its carrier protein (BCCP) and then the CO(2) group is transferred by the transcarboxylase to acetyl-CoA to form malonyl-CoA. This chain is Acetyl-coenzyme A carboxylase carboxyl transferase subunit beta, found in Methylorubrum extorquens (strain CM4 / NCIMB 13688) (Methylobacterium extorquens).